The primary structure comprises 187 residues: MNLQHHFLIAMPALQDPIFRRSVVYICEYNDEGAMGIIINKPLENLQVEGILEKLKIVPEPRNPEIRLDKPVMLGGPLAEDRGFILHTPPSDFSSSIRISDNTVITTSRDVLETLGTDRQPGNVLVALGYSSWEKGQLEQEILDNAWLTAPADQNILFRTPIADRWREAAKLIGIDIVTMPGVAGHA.

It belongs to the UPF0301 (AlgH) family.

The protein is UPF0301 protein KPN78578_33170 of Klebsiella pneumoniae subsp. pneumoniae (strain ATCC 700721 / MGH 78578).